The following is a 193-amino-acid chain: Probable nicotinate-nucleotide adenylyltransferase (193 aa).

Belongs to the NadD family.

It catalyses the reaction nicotinate beta-D-ribonucleotide + ATP + H(+) = deamido-NAD(+) + diphosphate. The protein operates within cofactor biosynthesis; NAD(+) biosynthesis; deamido-NAD(+) from nicotinate D-ribonucleotide: step 1/1. In terms of biological role, catalyzes the reversible adenylation of nicotinate mononucleotide (NaMN) to nicotinic acid adenine dinucleotide (NaAD). In Borreliella afzelii (strain PKo) (Borrelia afzelii), this protein is Probable nicotinate-nucleotide adenylyltransferase.